We begin with the raw amino-acid sequence, 233 residues long: MLSFDKVSTYYGKIQALHDVSVEVKKGEIVTLIGANGAGKSTLLMTLCGSPQAASGSIRYEGEELVGLPSSTIMRKSIAVVPEGRRVFSRLTVEENLAMGGFFTDKDDYQVQMDKVLELFPRLKERYEQRAGTMSGGEQQMLAIGRALMSKPKLLLLDEPSLGLAPIIIQQIFEIIEQLRREGVTVFLVEQNANQALKLADRAYVLENGRIVMHDTGAALLTNPKVRDAYLGG.

The region spanning Leu2 to Gly233 is the ABC transporter domain. Gly34 to Ser41 is an ATP binding site.

Belongs to the ABC transporter superfamily.

The protein localises to the cell inner membrane. Its function is as follows. Component of the high affinity leucine, isoleucine, valine, transport system (LIV-I), which is operative without Na(+) and is specific for alanine and threonine, in addition to branched-chain amino acids. The chain is High-affinity branched-chain amino acid transport ATP-binding protein BraG (braG) from Pseudomonas aeruginosa (strain ATCC 15692 / DSM 22644 / CIP 104116 / JCM 14847 / LMG 12228 / 1C / PRS 101 / PAO1).